A 93-amino-acid chain; its full sequence is Integration host factor subunit beta (93 aa).

This sequence belongs to the bacterial histone-like protein family. In terms of assembly, heterodimer of an alpha and a beta chain.

In terms of biological role, this protein is one of the two subunits of integration host factor, a specific DNA-binding protein that functions in genetic recombination as well as in transcriptional and translational control. The protein is Integration host factor subunit beta of Tolumonas auensis (strain DSM 9187 / NBRC 110442 / TA 4).